The chain runs to 557 residues: Potassium-transporting ATPase potassium-binding subunit (557 aa).

12 helical membrane-spanning segments follow: residues 5 to 25 (GFLL…PLGS), 63 to 83 (LSAI…MLLG), 132 to 152 (GLTV…FAFI), 170 to 190 (LLRI…LFFI), 253 to 273 (FVQM…FGEV), 283 to 303 (LLWA…WAEV), 329 to 349 (VLVS…AVIA), 356 to 376 (ALGG…FGGV), 379 to 399 (GLYG…LMIG), 416 to 436 (LTAL…ALAM), 484 to 504 (LLAF…MAIA), and 526 to 546 (LFVG…FIPA).

It belongs to the KdpA family. In terms of assembly, the system is composed of three essential subunits: KdpA, KdpB and KdpC.

It localises to the cell inner membrane. In terms of biological role, part of the high-affinity ATP-driven potassium transport (or Kdp) system, which catalyzes the hydrolysis of ATP coupled with the electrogenic transport of potassium into the cytoplasm. This subunit binds the periplasmic potassium ions and delivers the ions to the membrane domain of KdpB through an intramembrane tunnel. This Escherichia coli (strain SMS-3-5 / SECEC) protein is Potassium-transporting ATPase potassium-binding subunit.